The following is a 201-amino-acid chain: Ribonuclease HII (201 aa).

Residues 15 to 201 (AIIAGVDEAG…FAPIKAYGAP (187 aa)) form the RNase H type-2 domain. 3 residues coordinate a divalent metal cation: Asp21, Glu22, and Asp113.

This sequence belongs to the RNase HII family. Requires Mn(2+) as cofactor. The cofactor is Mg(2+).

The protein localises to the cytoplasm. It carries out the reaction Endonucleolytic cleavage to 5'-phosphomonoester.. Its function is as follows. Endonuclease that specifically degrades the RNA of RNA-DNA hybrids. This is Ribonuclease HII from Bordetella pertussis (strain Tohama I / ATCC BAA-589 / NCTC 13251).